The sequence spans 817 residues: Alpha-bisabolene synthase (817 aa).

5 residues coordinate Mg(2+): D566, D570, D713, T717, and E721. A DDXXD motif motif is present at residues 566–570 (DDMYD).

It belongs to the terpene synthase family. Tpsd subfamily. Mg(2+) is required as a cofactor. It depends on Mn(2+) as a cofactor. Requires K(+) as cofactor.

Its subcellular location is the cytoplasm. It catalyses the reaction (2E,6E)-farnesyl diphosphate = (E,R)-alpha-bisabolene + diphosphate. Its pathway is terpene metabolism; oleoresin biosynthesis. Converts farnesyl diphosphate to alpha-bisabolene. Involved in defensive oleoresin formation in conifers in response to insect attack or other injury. Involved in sesquiterpene (C15) olefins biosynthesis. In Abies grandis (Grand fir), this protein is Alpha-bisabolene synthase (ag1).